Consider the following 1574-residue polypeptide: Centrosomal protein of 170 kDa protein B (1574 aa).

Residues Ile-23–Ile-73 enclose the FHA domain. Disordered regions lie at residues Val-121–Gly-258, Asp-316–Gln-395, and Phe-409–Glu-578. Basic and acidic residues-rich tracts occupy residues Arg-147–Ala-157, Ser-182–Asp-197, and Leu-325–Val-344. Position 360 is a phosphoserine (Ser-360). Positions Ala-370–Glu-382 are enriched in low complexity. Phosphoserine is present on Ser-421. Positions Pro-430–Pro-446 are enriched in basic and acidic residues. The span at Ala-452–Ser-463 shows a compositional bias: polar residues. The span at Leu-465 to Leu-474 shows a compositional bias: basic and acidic residues. Residues Gly-475–Phe-488 show a composition bias toward polar residues. Residues Ser-478 and Ser-490 each carry the phosphoserine modification. Residues Glu-518–Leu-528 are compositionally biased toward pro residues. Ser-534 carries the post-translational modification Phosphoserine. Phosphothreonine is present on residues Thr-540 and Thr-541. Residues Ser-595, Ser-617, Ser-653, Ser-709, Ser-744, Ser-746, Ser-749, Ser-751, Ser-819, and Ser-843 each carry the phosphoserine modification. Disordered regions lie at residues Pro-637 to Leu-826, Arg-839 to Ser-882, Ser-924 to Gly-1300, Ala-1333 to Ala-1358, Asn-1377 to Thr-1407, and Asn-1510 to Ala-1535. Residues Phe-857–Pro-867 are compositionally biased toward polar residues. Ser-947 carries the post-translational modification Phosphoserine. Polar residues predominate over residues Asp-950–Ser-959. 2 positions are modified to phosphoserine: Ser-965 and Ser-981. Positions Ala-996–His-1005 are enriched in basic and acidic residues. The segment covering Arg-1084–Leu-1102 has biased composition (polar residues). At Ser-1122 the chain carries Phosphoserine. The span at Ala-1134–Glu-1146 shows a compositional bias: low complexity. 2 positions are modified to phosphoserine: Ser-1166 and Ser-1186. A compositionally biased stretch (low complexity) spans Ala-1199–Ala-1213. Residues His-1265 to Arg-1282 are compositionally biased toward polar residues. Thr-1289 carries the post-translational modification Phosphothreonine. Residue Ser-1341 is modified to Phosphoserine. Composition is skewed to polar residues over residues Pro-1344–Ala-1358 and Ser-1385–Asn-1396. Position 1345 is a phosphothreonine (Thr-1345). Ser-1347 bears the Phosphoserine mark. Phosphoserine occurs at positions 1530 and 1533.

Belongs to the CEP170 family.

The protein resides in the cytoplasm. It localises to the cytoskeleton. Functionally, plays a role in microtubule organization. This Mus musculus (Mouse) protein is Centrosomal protein of 170 kDa protein B (Cep170b).